A 375-amino-acid polypeptide reads, in one-letter code: Fructose-1,6-bisphosphate aldolase/phosphatase (375 aa).

The Proton acceptor; for FBP phosphatase activity role is filled by Asp-15. Residues Asp-15, His-22, Asp-56, and Asp-57 each contribute to the Mg(2+) site. His-22 is a binding site for beta-D-fructose 1,6-bisphosphate. His-22 is a dihydroxyacetone phosphate binding site. Beta-D-fructose 1,6-bisphosphate is bound at residue Tyr-94. Gln-98 lines the Mg(2+) pocket. 107-108 (GN) provides a ligand contact to beta-D-fructose 1,6-bisphosphate. Residue Asp-135 coordinates Mg(2+). Lys-136 is a binding site for beta-D-fructose 1,6-bisphosphate. Lys-136 contacts dihydroxyacetone phosphate. Tyr-237 serves as the catalytic Proton donor/acceptor; for FBP aldolase activity. Residues Lys-240, Asp-241, and Asp-242 each contribute to the Mg(2+) site. Lys-240 functions as the Schiff-base intermediate with DHAP; for FBP aldolase activity in the catalytic mechanism. Beta-D-fructose 1,6-bisphosphate contacts are provided by residues 250-251 (QS), Arg-274, Asp-295, and Tyr-357. Dihydroxyacetone phosphate contacts are provided by Arg-274 and Asp-295.

It belongs to the FBP aldolase/phosphatase family. Homooctamer; dimer of tetramers. Mg(2+) serves as cofactor.

The enzyme catalyses beta-D-fructose 1,6-bisphosphate = D-glyceraldehyde 3-phosphate + dihydroxyacetone phosphate. The catalysed reaction is beta-D-fructose 1,6-bisphosphate + H2O = beta-D-fructose 6-phosphate + phosphate. The protein operates within carbohydrate biosynthesis; gluconeogenesis. With respect to regulation, FBPase activity is inhibited by Ca(2+), ATP, ADP and phosphoenolpyruvate. Its function is as follows. Catalyzes two subsequent steps in gluconeogenesis: the aldol condensation of dihydroxyacetone phosphate (DHAP) and glyceraldehyde-3-phosphate (GA3P) to fructose-1,6-bisphosphate (FBP), and the dephosphorylation of FBP to fructose-6-phosphate (F6P). Can also dephosphorylate, with lower activity, other related substrates including fructose-1-phosphate, fructose-6-phosphate, glucose-1-phosphate, glucose-6-phosphate, glycerol-2-phosphate, phosphoenolpyruvate, 5'-AMP, 6'-ADP and 7'-ATP. In Thermococcus onnurineus (strain NA1), this protein is Fructose-1,6-bisphosphate aldolase/phosphatase.